Here is a 254-residue protein sequence, read N- to C-terminus: Methyltransferase-like protein 23 (254 aa).

Residues 1–27 (MKSFIFRQNPRKQQQEQNNLVDYSDSD) form a disordered region. Residues 11-21 (RKQQQEQNNLV) show a composition bias toward polar residues.

This sequence belongs to the methyltransferase superfamily. METTL23 family.

Probable methyltransferase. The protein is Methyltransferase-like protein 23 of Dictyostelium discoideum (Social amoeba).